A 176-amino-acid polypeptide reads, in one-letter code: MKIKNNIALIGFMGAGKSSVSKLLSERLGKTLVSTDACIETREGLSIISIFKEKGEDYFRQMESRVLEDLCRQSGQIIDCGGGIVMRPPNLSLMRLNCLVIYLESRPEDLEARLKNHTNRPLYNAERLDKMLKLLESRLPLYRAAANITISTHNKSCHEVCEEIEDKLREYENTSG.

14-19 (GAGKSS) is an ATP binding site. Residue serine 18 participates in Mg(2+) binding. Substrate is bound by residues aspartate 36, arginine 60, and glycine 82. Residue arginine 120 coordinates ATP. Arginine 138 is a binding site for substrate.

The protein belongs to the shikimate kinase family. As to quaternary structure, monomer. Mg(2+) serves as cofactor.

The protein resides in the cytoplasm. It catalyses the reaction shikimate + ATP = 3-phosphoshikimate + ADP + H(+). Its pathway is metabolic intermediate biosynthesis; chorismate biosynthesis; chorismate from D-erythrose 4-phosphate and phosphoenolpyruvate: step 5/7. In terms of biological role, catalyzes the specific phosphorylation of the 3-hydroxyl group of shikimic acid using ATP as a cosubstrate. The protein is Shikimate kinase of Dehalococcoides mccartyi (strain ATCC BAA-2266 / KCTC 15142 / 195) (Dehalococcoides ethenogenes (strain 195)).